The sequence spans 630 residues: MDPLRQPREEFVKVLGEVSRELGLPEVPEVERTRRYGFFSARFHKYKVDHSRLAEVVNLIKNKRFEFLSSLSVDGLYLNADLNVSKVAELVFEAVVKMGRKYGFTEECVTGSYLVEHTSANPVHPLHIGHGRNAILGDSLARLLKFCGNKVETHFYVDDCGVQVMYAAMGYNAVKDEVKKRIEKSKPDVVIGHVYSATNAVAEIGRLKKELEKAQDDERKREILREIDEWVAVLKRLMDSEGDIISKIAEELGRRDLLNEAVELNRRYESGDPEAKGVVREVVDLVLKGQRETLARLGVEIDKWDYESELTVWSSEAMRIVSELQKRWPQYIEIKGGAVVFRADKFVQDYNLWDVLDLPRFIPPVTLTRSDGTTLYVTRDVAYALWQARQGFDKVIRVISTEQTHEQAHVRIILYALGYVDEAKKIVHYAYEMVNLPGMKMSARRGQYISLDEILDEAAERSASLVKEKNPEVSGVIAERVGVGSVRYAFLTTSPRKPIEFKWDVVLNLRQNSGTFLQYTYVRAYSILEKAGEIGNVPVPENMLAEERELVLKIAEWPSVVKEAAKSLRPDYVAEYLDGLALVFNSYYEKAPVLKAEESVRGFRIAIVNAVKTVLEAGFYILGIPTLTKM.

The 'HIGH' region signature appears at 120–130 (ANPVHPLHIGH).

This sequence belongs to the class-I aminoacyl-tRNA synthetase family.

Its subcellular location is the cytoplasm. The enzyme catalyses tRNA(Arg) + L-arginine + ATP = L-arginyl-tRNA(Arg) + AMP + diphosphate. The polypeptide is Arginine--tRNA ligase (Pyrobaculum aerophilum (strain ATCC 51768 / DSM 7523 / JCM 9630 / CIP 104966 / NBRC 100827 / IM2)).